The chain runs to 457 residues: Antizyme inhibitor 2 (457 aa).

The interval 115 to 138 is necessary for polyamine uptake stimulation; it reads QVAQIKYAAKHGVRLLSFDNEVEL.

This sequence belongs to the Orn/Lys/Arg decarboxylase class-II family. ODC antizyme inhibitor subfamily. In terms of assembly, monomer. Interacts with OAZ1, OAZ2 and OAZ3; this interaction disrupts the interaction between the antizyme and ODC1. Does not form a heterodimer with ODC1. In terms of processing, ubiquitinated, leading to its proteasomal degradation; a process that is reduced in presence of antizymes. May also be degraded through the lysosomal degradative pathway in a proteasomal-independent manner.

The protein localises to the nucleus. Its subcellular location is the cytoplasm. It is found in the perinuclear region. The protein resides in the membrane. It localises to the cytoplasmic vesicle. The protein localises to the endoplasmic reticulum-Golgi intermediate compartment. Its subcellular location is the golgi apparatus. It is found in the cis-Golgi network. The protein resides in the trans-Golgi network. It localises to the cytoplasmic granule. The protein localises to the cell projection. Its subcellular location is the axon. It is found in the dendrite. The protein resides in the perikaryon. Antizyme inhibitor (AZI) protein that positively regulates ornithine decarboxylase (ODC) activity and polyamine uptake. AZI is an enzymatically inactive ODC homolog that counteracts the negative effect of ODC antizymes (AZs) OAZ1, OAZ2 and OAZ3 on ODC activity by competing with ODC for antizyme-binding. Inhibits antizyme-dependent ODC degradation and releases ODC monomers from their inactive complex with antizymes, leading to formation of the catalytically active ODC homodimer and restoring polyamine production. Participates in the morphological integrity of the trans-Golgi network (TGN) and functions as a regulator of intracellular secretory vesicle trafficking. The polypeptide is Antizyme inhibitor 2 (Azin2) (Rattus norvegicus (Rat)).